The chain runs to 195 residues: Cell division protein SepF (195 aa).

Positions 32–54 (RYSKTNSSETLAPEEEEPIRNRR) are disordered.

This sequence belongs to the SepF family. In terms of assembly, homodimer. Interacts with FtsZ.

It localises to the cytoplasm. Its function is as follows. Cell division protein that is part of the divisome complex and is recruited early to the Z-ring. Probably stimulates Z-ring formation, perhaps through the cross-linking of FtsZ protofilaments. Its function overlaps with FtsA. In Gloeothece citriformis (strain PCC 7424) (Cyanothece sp. (strain PCC 7424)), this protein is Cell division protein SepF.